We begin with the raw amino-acid sequence, 473 residues long: MTQSGGTNTGALWGGRFASGPAAAMAALSKSTHFDWALAPYDIRASKAHARVLHKAGLLSDADLDTMLAGLDGLAADVASGAFVPAETDEDVHGALERGLIDRVGAEVGGRLRAGRSRNDQVATLFRMWLRDGVRRVAAGVLDVVDALVEQAAAHPDAVMPGKTHLQAAQPVLLAHHLLAHAHPLLRDIERLRDFDKRAAVSPYGSGALAGSSLGLDPEAIAADLDFDAAAANSIDATSARDFAAEAAFVLAMIAVDLSRMAEEVIIWSTPEFGYVTLADAWSTGSSIMPQKKNPDVSELTRGKAGRLIGNLTGLLATLKAQPLAYNRDLQEDKEPVFDSVAQLELLLPAIAGLVGTLTFHTDRMAELAPAGFTLATDIAEWLVREGVPFRVAHEAAGACVRAAEARGVGLDALTDEEFAAIDPALTPRVREVLTVQGSIASRNAKGGTAGTRVAEQLAEVRAAAQQARAWIA.

The protein belongs to the lyase 1 family. Argininosuccinate lyase subfamily.

The protein resides in the cytoplasm. It catalyses the reaction 2-(N(omega)-L-arginino)succinate = fumarate + L-arginine. Its pathway is amino-acid biosynthesis; L-arginine biosynthesis; L-arginine from L-ornithine and carbamoyl phosphate: step 3/3. This Nocardia farcinica (strain IFM 10152) protein is Argininosuccinate lyase.